A 558-amino-acid chain; its full sequence is MSNTWWWLSVVLLILGLMPGMSQQAALAESDYYTAGVVEFKQSILSLSAWSDSLAGYVEIINSENASATDIIVFPESTLNSAGSTTFVPNPEDQINPCLSDPNATYYEEFLVTLSCAARNASKYIVINLTEKQKCEDIPEDTRPCASNGLNVFNTNVVFDRQGVVVSRYRKVHLYGEAKNSTFLPELITFETDFGVTFGHFICFDILFYTPAHQLIVEQGITDFVYPAMWFSQLPFLTAVQTQQGWAYANDVNLLASGASRPSIGNSGSGIYHGRSGTLTSVMRQDSGERAIYVAQVPKYTRSRSLKKRAKRSLQEIQTRQVASSSSFYMKRDYVENYESELLKLDEGTSGAINRTICQGSFCCNFDIAWRSLGTATENGSYYSYRLGTYDGWRNENNVDANYIRNCALFTCSGDSIDDCGKLLPTEGELQQSRVTFTRLAIGVTYPESREFLLFPDTLQDSLLPLEPSQFEWSQRKPTEDSYVQEVRFALKETQELSNLLTFGIYGNYYDNECTFGVGTEEEQLACGYRSGSPGLRILGGWLAMPLIILAIARTMSS.

The first 22 residues, 1-22 (MSNTWWWLSVVLLILGLMPGMS), serve as a signal peptide directing secretion. The CN hydrolase domain maps to 33-299 (YTAGVVEFKQ…RAIYVAQVPK (267 aa)). An N-linked (GlcNAc...) asparagine glycan is attached at Asn-65. The active-site Proton acceptor is the Glu-76. N-linked (GlcNAc...) asparagine glycans are attached at residues Asn-103, Asn-120, and Asn-128. Lys-171 (proton donor) is an active-site residue. A glycan (N-linked (GlcNAc...) asparagine) is linked at Asn-180. Cys-203 serves as the catalytic Nucleophile. N-linked (GlcNAc...) asparagine glycosylation is found at Asn-354 and Asn-379. Ser-531 carries the GPI-anchor amidated serine lipid modification. A propeptide spans 532-558 (GSPGLRILGGWLAMPLIILAIARTMSS) (removed in mature form).

It belongs to the carbon-nitrogen hydrolase superfamily. BTD/VNN family. As to expression, expressed in larvae and early pupae. Expressed in third instar larvae.

It is found in the cell membrane. This is Vanin-like protein 1 from Drosophila melanogaster (Fruit fly).